Consider the following 385-residue polypeptide: Suppressor protein STP22 of temperature-sensitive alpha-factor receptor and arginine permease (385 aa).

One can recognise a UEV domain in the interval 12–161 (AVVNWLFKVI…LHEPPQDQAP (150 aa)). The segment at 155 to 219 (PPQDQAPSLP…DMDNTDISPT (65 aa)) is disordered. Over residues 168-177 (NTQLQQEQNT) the composition is skewed to polar residues. Pro residues predominate over residues 178 to 201 (PPLPPKPKSPHLKPPLPPPPPPQP). A coiled-coil region spans residues 272 to 300 (LRAVEQAIEQTMHSLNAQIDVLTANRAKV). Residues 322-385 (TDGLNQLYNL…HIQRITSPLS (64 aa)) form the SB domain.

The protein belongs to the ubiquitin-conjugating enzyme family. UEV subfamily. Component of the ESCRT-I complex (endosomal sorting complex required for transport I) which consists of STP22, VPS28, SRN2 and MVB12 in a 1:1:1:1 stoichiometry. Interacts with HSE1 and VPS27. Interacts with MVB12 and SRN2.

It localises to the cytoplasm. The protein localises to the endosome. It is found in the late endosome membrane. In terms of biological role, component of the ESCRT-I complex, a regulator of vesicular trafficking process. Binds to ubiquitinated cargo proteins and is required for the sorting of endocytic ubiquitinated cargos into multivesicular bodies (MVBs). Mediates the association to the ESCRT-0 complex. Required for vacuolar targeting of temperature-sensitive plasma membrane proteins STE2 and CAN1. The polypeptide is Suppressor protein STP22 of temperature-sensitive alpha-factor receptor and arginine permease (STP22) (Saccharomyces cerevisiae (strain ATCC 204508 / S288c) (Baker's yeast)).